The chain runs to 227 residues: 2-C-methyl-D-erythritol 4-phosphate cytidylyltransferase (227 aa).

Belongs to the IspD/TarI cytidylyltransferase family. IspD subfamily.

The catalysed reaction is 2-C-methyl-D-erythritol 4-phosphate + CTP + H(+) = 4-CDP-2-C-methyl-D-erythritol + diphosphate. The protein operates within isoprenoid biosynthesis; isopentenyl diphosphate biosynthesis via DXP pathway; isopentenyl diphosphate from 1-deoxy-D-xylulose 5-phosphate: step 2/6. Its function is as follows. Catalyzes the formation of 4-diphosphocytidyl-2-C-methyl-D-erythritol from CTP and 2-C-methyl-D-erythritol 4-phosphate (MEP). In Bordetella parapertussis (strain 12822 / ATCC BAA-587 / NCTC 13253), this protein is 2-C-methyl-D-erythritol 4-phosphate cytidylyltransferase.